We begin with the raw amino-acid sequence, 663 residues long: Leishmanolysin-like peptidase (663 aa).

A Zn(2+)-binding site is contributed by H246. The active site involves E247. Positions 250 and 353 each coordinate Zn(2+).

It belongs to the peptidase M8 family. Zn(2+) serves as cofactor.

It is found in the cytoplasm. Functionally, metalloprotease. The polypeptide is Leishmanolysin-like peptidase (Caenorhabditis briggsae).